The sequence spans 967 residues: A disintegrin and metalloproteinase with thrombospondin motifs 1 (967 aa).

Disordered stretches follow at residues 1–27 and 192–250; these read MQRA…APGS and GDVG…SIRK. An N-terminal signal peptide occupies residues 1-49; it reads MQRAVPEGFGRRKLGSDMGNAERAPGSRSFGPVPTLLLLAAALLAVSDA. A propeptide spanning residues 50–252 is cleaved from the precursor; it reads LGRPSEEDEE…TGTGSIRKKR (203 aa). The short motif at 196-203 is the Cysteine switch element; that stretch reads GTCGVVDD. Residue cysteine 198 coordinates Zn(2+). The span at 203-212 shows a compositional bias: basic and acidic residues; it reads DEPRPTGKAE. Over residues 213–226 the composition is skewed to acidic residues; sequence TEDEDEGTEGEDEG. The Peptidase M12B domain maps to 258–467; that stretch reads RYVETMLVAD…GHGECLMDKP (210 aa). Glutamate 261, aspartate 344, and aspartate 351 together coordinate Ca(2+). 4 disulfide bridges follow: cysteine 333/cysteine 385, cysteine 362/cysteine 367, cysteine 379/cysteine 462, and cysteine 417/cysteine 446. Histidine 401 contacts Zn(2+). The active site involves glutamate 402. Zn(2+) is bound by residues histidine 405 and histidine 411. Ca(2+) contacts are provided by cysteine 462 and aspartate 465. The 84-residue stretch at 476–559 folds into the Disintegrin domain; that stretch reads DLPGTSYDAN…DRKHFDTPFH (84 aa). 4 disulfides stabilise this stretch: cysteine 488/cysteine 511, cysteine 499/cysteine 521, cysteine 506/cysteine 540, and cysteine 534/cysteine 545. N-linked (GlcNAc...) asparagine glycosylation occurs at asparagine 547. Residues 559-614 enclose the TSP type-1 1 domain; the sequence is HGSWGMWGPWGDCSRTCGGGVQYTMRECDNPVPKNGGKYCEGKRVRYRSCNLEDCP. 3 disulfides stabilise this stretch: cysteine 571–cysteine 608, cysteine 575–cysteine 613, and cysteine 586–cysteine 598. Asparagine 720 and asparagine 764 each carry an N-linked (GlcNAc...) asparagine glycan. The spacer stretch occupies residues 725 to 849; the sequence is KKISGSVTSA…YFVKKKKESF (125 aa). TSP type-1 domains lie at 854-905 and 908-967; these read TFSA…RPCA and PCPQ…AECS.

It depends on Zn(2+) as a cofactor. Post-translationally, the precursor is cleaved by a furin endopeptidase. Glycosylated. Can be O-fucosylated by POFUT2 on a serine or a threonine residue found within the consensus sequence C1-X(2)-(S/T)-C2-G of the TSP type-1 repeat domains where C1 and C2 are the first and second cysteine residue of the repeat, respectively. Fucosylated repeats can then be further glycosylated by the addition of a beta-1,3-glucose residue by the glucosyltransferase, B3GALTL. Fucosylation mediates the efficient secretion of ADAMTS family members. Can also be C-glycosylated with one or two mannose molecules on tryptophan residues within the consensus sequence W-X-X-W of the TPRs, and N-glycosylated. These other glycosylations can also facilitate secretion.

It localises to the secreted. The protein resides in the extracellular space. The protein localises to the extracellular matrix. Metalloprotease which cleaves aggrecan, a cartilage proteoglycan, at the '1938-Glu-|-Leu-1939' site (within the chondroitin sulfate attachment domain), and may be involved in its turnover. Also cleaves COMP. Has angiogenic inhibitor activity. May play a critical role in follicular rupture. This Homo sapiens (Human) protein is A disintegrin and metalloproteinase with thrombospondin motifs 1 (ADAMTS1).